The primary structure comprises 666 residues: Hybrid PKS-NRPS synthetase pytA (666 aa).

The region spanning 1 to 340 is the Ketosynthase family 3 (KS3) domain; the sequence is MDPQQRLLLE…GTNAHAILEE (340 aa). Residues C87, H222, and H260 each act as for beta-ketoacyl synthase activity in the active site. Positions 455-665 are malonyl-CoA:ACP transacylase (MAT) domain; it reads VFTGQGAQWF…VFVHSLVIKR (211 aa). S548 functions as the For malonyltransferase activity in the catalytic mechanism.

This sequence in the C-terminal section; belongs to the NRP synthetase family.

It participates in secondary metabolite biosynthesis. Hybrid PKS-NRPS synthetase; part of the gene cluster that mediates the biosynthesis of pyranterreones, a family of antioxidative compounds. The first step of pyranonigrins biosynthesis is performed by the hybrid PKS-NRPS synthetase pytA that condenses 4 malonyl-CoA units ato the acetyl starter unit by the modular PKS of pytA. The acyl chain is then connected to an L-serine through the amide bond by the modular NRPS of pytA. A tetramic acid is formed and released from the PKS-NRPS pytA to give pyranterreone 5 with the help of the thioesterase pytI. Pyranterreone 5 could be methylated by pytC to afford pyranterreone 6. Both pyranterreones 5 and 6 are subsequently oxidized by the FAD-linked oxidoreductase pytB and the cytochrome P450 monooxygenase pytD to form the fused gamma-pyrone core, resulting in pyranterreones 7 and 11, respectively. The hydroxy group at C-8 of pyranterreones 7 and 11 are dehydrated by the aspartyl protease pytH to form a delta-7 double bond to give pyranterreones 3 and 1, 2 accordingly. The exo-methylene of pyranterreone 3 could be reduced into a pendant methyl by reductase pytE to provide pyranterreone 4, also known as cordylactam. Pyranterreone 4 can be reconverted to pyranterreone 3 through pytB-catalyzed dehydrogenation or further oxidized to pyranterreones 9 and 10. This Aspergillus terreus (strain NIH 2624 / FGSC A1156) protein is Hybrid PKS-NRPS synthetase pytA.